Reading from the N-terminus, the 94-residue chain is Large ribosomal subunit protein bL25 (94 aa).

The protein belongs to the bacterial ribosomal protein bL25 family. Part of the 50S ribosomal subunit; part of the 5S rRNA/L5/L18/L25 subcomplex. Contacts the 5S rRNA. Binds to the 5S rRNA independently of L5 and L18.

In terms of biological role, this is one of the proteins that binds to the 5S RNA in the ribosome where it forms part of the central protuberance. This is Large ribosomal subunit protein bL25 from Klebsiella pneumoniae subsp. pneumoniae (strain ATCC 700721 / MGH 78578).